The sequence spans 329 residues: 4-hydroxy-3-methylbut-2-enyl diphosphate reductase (329 aa).

Residue Cys-27 participates in [4Fe-4S] cluster binding. (2E)-4-hydroxy-3-methylbut-2-enyl diphosphate-binding residues include His-56 and His-89. Dimethylallyl diphosphate contacts are provided by His-56 and His-89. 2 residues coordinate isopentenyl diphosphate: His-56 and His-89. Cys-111 contributes to the [4Fe-4S] cluster binding site. Residue His-139 participates in (2E)-4-hydroxy-3-methylbut-2-enyl diphosphate binding. His-139 lines the dimethylallyl diphosphate pocket. Position 139 (His-139) interacts with isopentenyl diphosphate. Glu-141 serves as the catalytic Proton donor. Thr-179 lines the (2E)-4-hydroxy-3-methylbut-2-enyl diphosphate pocket. Cys-209 contacts [4Fe-4S] cluster. (2E)-4-hydroxy-3-methylbut-2-enyl diphosphate is bound by residues Ser-237, Ser-238, Asn-239, and Ser-281. Residues Ser-237, Ser-238, Asn-239, and Ser-281 each coordinate dimethylallyl diphosphate. Isopentenyl diphosphate contacts are provided by Ser-237, Ser-238, Asn-239, and Ser-281.

The protein belongs to the IspH family. [4Fe-4S] cluster serves as cofactor.

It catalyses the reaction isopentenyl diphosphate + 2 oxidized [2Fe-2S]-[ferredoxin] + H2O = (2E)-4-hydroxy-3-methylbut-2-enyl diphosphate + 2 reduced [2Fe-2S]-[ferredoxin] + 2 H(+). The enzyme catalyses dimethylallyl diphosphate + 2 oxidized [2Fe-2S]-[ferredoxin] + H2O = (2E)-4-hydroxy-3-methylbut-2-enyl diphosphate + 2 reduced [2Fe-2S]-[ferredoxin] + 2 H(+). It participates in isoprenoid biosynthesis; dimethylallyl diphosphate biosynthesis; dimethylallyl diphosphate from (2E)-4-hydroxy-3-methylbutenyl diphosphate: step 1/1. Its pathway is isoprenoid biosynthesis; isopentenyl diphosphate biosynthesis via DXP pathway; isopentenyl diphosphate from 1-deoxy-D-xylulose 5-phosphate: step 6/6. Catalyzes the conversion of 1-hydroxy-2-methyl-2-(E)-butenyl 4-diphosphate (HMBPP) into a mixture of isopentenyl diphosphate (IPP) and dimethylallyl diphosphate (DMAPP). Acts in the terminal step of the DOXP/MEP pathway for isoprenoid precursor biosynthesis. This Methylibium petroleiphilum (strain ATCC BAA-1232 / LMG 22953 / PM1) protein is 4-hydroxy-3-methylbut-2-enyl diphosphate reductase.